We begin with the raw amino-acid sequence, 117 residues long: Aspartate 1-decarboxylase (117 aa).

Ser-25 serves as the catalytic Schiff-base intermediate with substrate; via pyruvic acid. Ser-25 is modified (pyruvic acid (Ser)). Thr-57 lines the substrate pocket. The active-site Proton donor is Tyr-58. 73–75 (GAA) serves as a coordination point for substrate.

This sequence belongs to the PanD family. As to quaternary structure, heterooctamer of four alpha and four beta subunits. Pyruvate serves as cofactor. Is synthesized initially as an inactive proenzyme, which is activated by self-cleavage at a specific serine bond to produce a beta-subunit with a hydroxyl group at its C-terminus and an alpha-subunit with a pyruvoyl group at its N-terminus.

It is found in the cytoplasm. It carries out the reaction L-aspartate + H(+) = beta-alanine + CO2. The protein operates within cofactor biosynthesis; (R)-pantothenate biosynthesis; beta-alanine from L-aspartate: step 1/1. Catalyzes the pyruvoyl-dependent decarboxylation of aspartate to produce beta-alanine. This chain is Aspartate 1-decarboxylase, found in Bacteroides thetaiotaomicron (strain ATCC 29148 / DSM 2079 / JCM 5827 / CCUG 10774 / NCTC 10582 / VPI-5482 / E50).